A 601-amino-acid chain; its full sequence is Group B oligopeptidase PepB (601 aa).

His-386 lines the Zn(2+) pocket. The active site involves Glu-387. 2 residues coordinate Zn(2+): His-390 and His-393.

This sequence belongs to the peptidase M3B family. Zn(2+) is required as a cofactor.

The protein resides in the cytoplasm. Functionally, has oligopeptidase activity and degrades a variety of small bioactive peptides, including bradykinin, neurotensin, and peptide fragments of substance P and adrenocorticotropin. Also hydrolyzes the synthetic collagen-like substrate N-(3-[2-furyl]acryloyl)-Leu-Gly-Pro-Ala (FALGPA). The protein is Group B oligopeptidase PepB (pepB) of Streptococcus agalactiae serotype III (strain NEM316).